Consider the following 102-residue polypeptide: Citrate lyase acyl carrier protein (102 aa).

Serine 14 is modified (O-(phosphoribosyl dephospho-coenzyme A)serine).

The protein belongs to the CitD family. Oligomer with a subunit composition of (alpha,beta,gamma)6.

Its subcellular location is the cytoplasm. In terms of biological role, covalent carrier of the coenzyme of citrate lyase. The sequence is that of Citrate lyase acyl carrier protein from Streptococcus mutans serotype c (strain ATCC 700610 / UA159).